Reading from the N-terminus, the 399-residue chain is MGSCSLQLPLINLADKTLEPGSSKWAEVRSDVRKALEDFGCFEASYDKVSLELQESIMKTMEELFALPVETKQRNVCPKPYVGYLNHNNLSESLGISNANILENINEFTQQLWPHGDGNENISKTIQLFAEKLVEIDVMVRRMVMESFGIEKYIDDHLKSTAYATDELNIVGVEPNVGVKVNADISDDVNANASVNAGVGANVNADTGVNDNLNVDANVAVGGGVNANTDLGVGVNVNSNVAVNAKTGGDDVEANDDNEEKKLGLPCHTDKNLFTVLFQHEIEGLEVKTKDEKWIRVKPSPNTFIVIAGDSLCALMNGRIRAPYHRVRVTEKKRTRYTAAIFTCPKPDYVIEAPKELVDEKHPRLFRPFDYRDLFTFYHSEAGRKIQYTLQAYCAVSEA.

One can recognise a Fe2OG dioxygenase domain in the interval 248–345 (GGDDVEANDD…RYTAAIFTCP (98 aa)). Residues H268, D270, and H325 each contribute to the Fe cation site. R336 contributes to the 2-oxoglutarate binding site.

Belongs to the iron/ascorbate-dependent oxidoreductase family. It depends on Fe(2+) as a cofactor.

The chain is Probable inactive 2-oxoglutarate-dependent dioxygenase AOP2 (AOP2) from Arabidopsis thaliana (Mouse-ear cress).